Reading from the N-terminus, the 142-residue chain is Large ribosomal subunit protein uL13 (142 aa).

The protein belongs to the universal ribosomal protein uL13 family. In terms of assembly, part of the 50S ribosomal subunit.

Its function is as follows. This protein is one of the early assembly proteins of the 50S ribosomal subunit, although it is not seen to bind rRNA by itself. It is important during the early stages of 50S assembly. The sequence is that of Large ribosomal subunit protein uL13 from Pseudomonas putida (strain W619).